The chain runs to 135 residues: MQSSSPSQNHSTQVPIKVTHRQVKKRAIRRRRVDLVCGCSYYLHINCFNHGFTHRGSHHCSSSNEWRVYLGNKQSPVFHNHQAPTTTIPAEPGHHNSPGSIQSQPEEGAGDSQMFSQLPDLDNLTASDWSFLKGL.

Residues lysine 17–arginine 32 carry the Nuclear localization signal motif. Residues cysteine 37–histidine 54 fold into a zinc finger. Over residues valine 77–isoleucine 88 the composition is skewed to polar residues. The segment at valine 77–glutamine 117 is disordered. A transactivation region spans residues aspartate 120–leucine 135.

Belongs to the geminiviridae transcriptional activator protein family. As to quaternary structure, monomer. Homodimer. Homooligomer. Self-interaction correlates with nuclear localization and efficient activation of transcription. Monomers suppress local silencing by interacting with and inactivating host adenosine kinase 2 (ADK2) in the cytoplasm. Interacts with and inhibits host SNF1 kinase. Binds to ssDNA. Phosphorylated.

The protein localises to the host nucleus. Its subcellular location is the host cytoplasm. Its function is as follows. Strong activator of the late viral genes promoters. Enhances the expression of the capsid protein and nuclear shuttle protein. Acts as a suppressor of RNA-mediated gene silencing, also known as post-transcriptional gene silencing (PTGS), a mechanism of plant viral defense that limits the accumulation of viral RNAs. Suppresses the host RNA silencing by inhibiting adenosine kinase 2 (ADK2), a kinase involved in a general methylation pathway. Also suppresses the host basal defense by interacting with and inhibiting SNF1 kinase, a key regulator of cell metabolism implicated in innate antiviral defense. Determines pathogenicity. The sequence is that of Transcriptional activator protein from Hewittia sublobata (Coralbush).